The primary structure comprises 171 residues: 3-hydroxydecanoyl-[acyl-carrier-protein] dehydratase (171 aa).

The active site involves H70.

This sequence belongs to the thioester dehydratase family. FabA subfamily. In terms of assembly, homodimer.

Its subcellular location is the cytoplasm. It carries out the reaction a (3R)-hydroxyacyl-[ACP] = a (2E)-enoyl-[ACP] + H2O. The enzyme catalyses (3R)-hydroxydecanoyl-[ACP] = (2E)-decenoyl-[ACP] + H2O. It catalyses the reaction (2E)-decenoyl-[ACP] = (3Z)-decenoyl-[ACP]. Its pathway is lipid metabolism; fatty acid biosynthesis. Necessary for the introduction of cis unsaturation into fatty acids. Catalyzes the dehydration of (3R)-3-hydroxydecanoyl-ACP to E-(2)-decenoyl-ACP and then its isomerization to Z-(3)-decenoyl-ACP. Can catalyze the dehydratase reaction for beta-hydroxyacyl-ACPs with saturated chain lengths up to 16:0, being most active on intermediate chain length. In Stenotrophomonas maltophilia (strain R551-3), this protein is 3-hydroxydecanoyl-[acyl-carrier-protein] dehydratase.